Consider the following 198-residue polypeptide: dITP/XTP pyrophosphatase (198 aa).

Position 7–12 (7–12) interacts with substrate; sequence THNPHK. Mg(2+) is bound by residues glutamate 40 and aspartate 69. Aspartate 69 (proton acceptor) is an active-site residue. Residues threonine 70, 151-154, lysine 174, and 179-180 contribute to the substrate site; these read FGYD and HR.

Belongs to the HAM1 NTPase family. In terms of assembly, homodimer. Requires Mg(2+) as cofactor.

It catalyses the reaction XTP + H2O = XMP + diphosphate + H(+). It carries out the reaction dITP + H2O = dIMP + diphosphate + H(+). The catalysed reaction is ITP + H2O = IMP + diphosphate + H(+). Its function is as follows. Pyrophosphatase that catalyzes the hydrolysis of nucleoside triphosphates to their monophosphate derivatives, with a high preference for the non-canonical purine nucleotides XTP (xanthosine triphosphate), dITP (deoxyinosine triphosphate) and ITP. Seems to function as a house-cleaning enzyme that removes non-canonical purine nucleotides from the nucleotide pool, thus preventing their incorporation into DNA/RNA and avoiding chromosomal lesions. This chain is dITP/XTP pyrophosphatase, found in Thermoanaerobacter pseudethanolicus (strain ATCC 33223 / 39E) (Clostridium thermohydrosulfuricum).